Consider the following 193-residue polypeptide: Xanthine phosphoribosyltransferase (193 aa).

Positions 20 and 27 each coordinate xanthine. Residue 128 to 132 participates in 5-phospho-alpha-D-ribose 1-diphosphate binding; that stretch reads ANGQA. Lysine 156 contacts xanthine.

This sequence belongs to the purine/pyrimidine phosphoribosyltransferase family. Xpt subfamily. As to quaternary structure, homodimer.

It is found in the cytoplasm. It catalyses the reaction XMP + diphosphate = xanthine + 5-phospho-alpha-D-ribose 1-diphosphate. Its pathway is purine metabolism; XMP biosynthesis via salvage pathway; XMP from xanthine: step 1/1. Its function is as follows. Converts the preformed base xanthine, a product of nucleic acid breakdown, to xanthosine 5'-monophosphate (XMP), so it can be reused for RNA or DNA synthesis. The chain is Xanthine phosphoribosyltransferase from Streptococcus pneumoniae (strain P1031).